Consider the following 874-residue polypeptide: Alanine--tRNA ligase (874 aa).

H564, H568, C665, and H669 together coordinate Zn(2+).

This sequence belongs to the class-II aminoacyl-tRNA synthetase family. Requires Zn(2+) as cofactor.

The protein localises to the cytoplasm. The catalysed reaction is tRNA(Ala) + L-alanine + ATP = L-alanyl-tRNA(Ala) + AMP + diphosphate. In terms of biological role, catalyzes the attachment of alanine to tRNA(Ala) in a two-step reaction: alanine is first activated by ATP to form Ala-AMP and then transferred to the acceptor end of tRNA(Ala). Also edits incorrectly charged Ser-tRNA(Ala) and Gly-tRNA(Ala) via its editing domain. This chain is Alanine--tRNA ligase, found in Polaromonas naphthalenivorans (strain CJ2).